The following is a 236-amino-acid chain: Leucyl/phenylalanyl-tRNA--protein transferase (236 aa).

It belongs to the L/F-transferase family.

The protein resides in the cytoplasm. The enzyme catalyses N-terminal L-lysyl-[protein] + L-leucyl-tRNA(Leu) = N-terminal L-leucyl-L-lysyl-[protein] + tRNA(Leu) + H(+). It catalyses the reaction N-terminal L-arginyl-[protein] + L-leucyl-tRNA(Leu) = N-terminal L-leucyl-L-arginyl-[protein] + tRNA(Leu) + H(+). The catalysed reaction is L-phenylalanyl-tRNA(Phe) + an N-terminal L-alpha-aminoacyl-[protein] = an N-terminal L-phenylalanyl-L-alpha-aminoacyl-[protein] + tRNA(Phe). Functionally, functions in the N-end rule pathway of protein degradation where it conjugates Leu, Phe and, less efficiently, Met from aminoacyl-tRNAs to the N-termini of proteins containing an N-terminal arginine or lysine. This Shewanella putrefaciens (strain CN-32 / ATCC BAA-453) protein is Leucyl/phenylalanyl-tRNA--protein transferase.